Reading from the N-terminus, the 210-residue chain is LexA repressor (210 aa).

The segment at residues 31 to 51 (RAEISRELGFRSPNAAEEHLK) is a DNA-binding region (H-T-H motif). Active-site for autocatalytic cleavage activity residues include serine 126 and lysine 163.

This sequence belongs to the peptidase S24 family. In terms of assembly, homodimer.

The enzyme catalyses Hydrolysis of Ala-|-Gly bond in repressor LexA.. Functionally, represses a number of genes involved in the response to DNA damage (SOS response), including recA and lexA. In the presence of single-stranded DNA, RecA interacts with LexA causing an autocatalytic cleavage which disrupts the DNA-binding part of LexA, leading to derepression of the SOS regulon and eventually DNA repair. The chain is LexA repressor from Actinobacillus succinogenes (strain ATCC 55618 / DSM 22257 / CCUG 43843 / 130Z).